Here is a 394-residue protein sequence, read N- to C-terminus: Elongation factor Tu (394 aa).

A tr-type G domain is found at 10–204; sequence KPHVNVGTIG…HLDSYIPEPE (195 aa). A G1 region spans residues 19–26; it reads GHVDHGKT. 19–26 provides a ligand contact to GTP; it reads GHVDHGKT. Mg(2+) is bound at residue threonine 26. The G2 stretch occupies residues 60–64; that stretch reads GITIN. The interval 81–84 is G3; that stretch reads DCPG. Residues 81-85 and 136-139 contribute to the GTP site; these read DCPGH and NKCD. The interval 136–139 is G4; sequence NKCD. Residues 174–176 form a G5 region; it reads SAL.

This sequence belongs to the TRAFAC class translation factor GTPase superfamily. Classic translation factor GTPase family. EF-Tu/EF-1A subfamily. In terms of assembly, monomer.

It localises to the cytoplasm. The catalysed reaction is GTP + H2O = GDP + phosphate + H(+). In terms of biological role, GTP hydrolase that promotes the GTP-dependent binding of aminoacyl-tRNA to the A-site of ribosomes during protein biosynthesis. The sequence is that of Elongation factor Tu from Cronobacter sakazakii (strain ATCC BAA-894) (Enterobacter sakazakii).